Consider the following 421-residue polypeptide: Zinc metalloproteinase-disintegrin-like lachestatin-2 (421 aa).

The region spanning Lys-10–Pro-206 is the Peptidase M12B domain. Disulfide bonds link Cys-121/Cys-201, Cys-161/Cys-185, and Cys-163/Cys-168. A Zn(2+)-binding site is contributed by His-146. Glu-147 is an active-site residue. Zn(2+) is bound by residues His-150 and His-156. The Disintegrin domain occupies Pro-214–Asn-299. 6 residues coordinate Ca(2+): Val-216, Asn-219, Phe-221, Glu-223, Glu-226, and Asp-229. 14 disulfide bridges follow: Cys-217/Cys-246, Cys-228/Cys-241, Cys-230/Cys-236, Cys-240/Cys-263, Cys-254/Cys-260, Cys-259/Cys-285, Cys-272/Cys-292, Cys-279/Cys-310, Cys-303/Cys-315, Cys-322/Cys-372, Cys-337/Cys-383, Cys-350/Cys-360, Cys-367/Cys-409, and Cys-403/Cys-414. Residues Glu-278–Asp-280 carry the D/ECD-tripeptide motif. Residues Asp-280, Met-281, Asp-283, Asp-294, and Arg-295 each contribute to the Ca(2+) site. Asn-312 carries an N-linked (GlcNAc...) asparagine glycan.

It belongs to the venom metalloproteinase (M12B) family. P-III subfamily. P-IIIc sub-subfamily. In terms of assembly, homodimer; disulfide-linked. It depends on Zn(2+) as a cofactor. Expressed by the venom gland.

It localises to the secreted. In terms of biological role, snake venom zinc metalloprotease that induces apoptosis in vascular endothelial cells (VEC), without degrading the extracellular matrix (it cannot cleave collagen) or inhibiting adhesion of VEC. Has also fibrinogenolytic and hemorrhagic activities. In Lachesis muta rhombeata (Bushmaster), this protein is Zinc metalloproteinase-disintegrin-like lachestatin-2.